The following is an 874-amino-acid chain: Alanine--tRNA ligase (874 aa).

Zn(2+)-binding residues include H563, H567, C665, and H669.

This sequence belongs to the class-II aminoacyl-tRNA synthetase family. Zn(2+) serves as cofactor.

The protein resides in the cytoplasm. The catalysed reaction is tRNA(Ala) + L-alanine + ATP = L-alanyl-tRNA(Ala) + AMP + diphosphate. Catalyzes the attachment of alanine to tRNA(Ala) in a two-step reaction: alanine is first activated by ATP to form Ala-AMP and then transferred to the acceptor end of tRNA(Ala). Also edits incorrectly charged Ser-tRNA(Ala) and Gly-tRNA(Ala) via its editing domain. The chain is Alanine--tRNA ligase from Actinobacillus pleuropneumoniae serotype 5b (strain L20).